We begin with the raw amino-acid sequence, 401 residues long: Mu-type opioid receptor (401 aa).

At 1–69 (MDSSAVPANA…CPPTGSPSMI (69 aa)) the chain is on the extracellular side. Residues Asn-9, Asn-12, Asn-34, Asn-41, and Asn-49 are each glycosylated (N-linked (GlcNAc...) asparagine). Residues 70–94 (TAITIMALYSIVCVVGLFGNFLVMY) traverse the membrane as a helical segment. Over 95–107 (VIVRYTKMKTATN) the chain is Cytoplasmic. The chain crosses the membrane as a helical span at residues 108–132 (IYIFNLALADALATSTLPFQSVNYL). The Extracellular segment spans residues 133–143 (MGTWPFGTILC). Cysteines 143 and 220 form a disulfide. A helical transmembrane segment spans residues 144 to 166 (KIVISIDYYNMFTSIFTLCTMSV). The Cytoplasmic segment spans residues 167-186 (DRYIAVCHPVKALDFRTPRN). Tyr-169 is modified (phosphotyrosine). A helical membrane pass occupies residues 187 to 208 (AKIINVCNWILSSAIGLPVMFM). Topologically, residues 209–231 (ATTKYRHGSIDCTLTFSHPTWYW) are extracellular. A helical membrane pass occupies residues 232–256 (ENLLKICVFIFAFIMPVLIITVCYG). Over 257–280 (LMILRLKSVRMLSGSKEKDRNLRR) the chain is Cytoplasmic. Residues 281 to 307 (ITRMVLVVVAVFIVCWTPIHIYVIIKA) traverse the membrane as a helical segment. Residues 308–315 (LVTIPETT) lie on the Extracellular side of the membrane. A helical membrane pass occupies residues 316 to 339 (FQTVSWHFCIALGYTNSCLNPVLY). The short motif at 335 to 339 (NPVLY) is the NPxxY; plays a role in stabilizing the activated conformation of the receptor element. Residues 340–401 (AFLDENFKRC…NLEAETAPLP (62 aa)) lie on the Cytoplasmic side of the membrane. Cys-354 is lipidated: S-palmitoyl cysteine. A disordered region spans residues 365 to 388 (NSTRIRQNTRDHPSTANTVDRTNH). Ser-366 is subject to Phosphoserine. Position 373 is a phosphothreonine (Thr-373). Ser-378 is subject to Phosphoserine. Thr-397 carries the phosphothreonine modification.

It belongs to the G-protein coupled receptor 1 family. Forms homooligomers and heterooligomers with other GPCRs, such as OPRD1, OPRK1, OPRL1, NPFFR2, ADRA2A, SSTR2, CNR1 and CCR5 (probably in dimeric forms). Interacts with heterotrimeric G proteins; interaction with a heterotrimeric complex containing GNAI1, GNB1 and GNG2 stabilizes the active conformation of the receptor and increases its affinity for endomorphin-2, the synthetic opioid peptide DAMGO and for morphinan agonists. Interacts with PPL; the interaction disrupts agonist-mediated G-protein activation. Interacts (via C-terminus) with DNAJB4 (via C-terminus). Interacts with calmodulin; the interaction inhibits the constitutive activity of OPRM1; it abolishes basal and attenuates agonist-stimulated G-protein coupling. Interacts with FLNA, PLD2, RANBP9 and WLS and GPM6A. Interacts with RTP4. Interacts with SYP and GNAS. Interacts with RGS9, RGS17, RGS20, RGS4, PPP1R9B and HINT1. Phosphorylated. Differentially phosphorylated in basal and agonist-induced conditions. Agonist-mediated phosphorylation modulates receptor internalization. Phosphorylated by GRK2 in a agonist-dependent manner. Phosphorylation at Tyr-169 requires receptor activation, is dependent on non-receptor protein tyrosine kinase Src and results in a decrease in agonist efficacy by reducing G-protein coupling efficiency. Phosphorylated on tyrosine residues; the phosphorylation is involved in agonist-induced G-protein-independent receptor down-regulation. Phosphorylation at Ser-378 is involved in G-protein-dependent but not beta-arrestin-dependent activation of the ERK pathway. In terms of processing, ubiquitinated. A basal ubiquitination seems not to be related to degradation. Ubiquitination is increased upon formation of OPRM1:OPRD1 oligomers leading to proteasomal degradation; the ubiquitination is diminished by RTP4.

The protein localises to the cell membrane. Its subcellular location is the cell projection. It is found in the axon. It localises to the perikaryon. The protein resides in the dendrite. The protein localises to the endosome. In terms of biological role, receptor for endogenous opioids such as beta-endorphin and endomorphin. Receptor for natural and synthetic opioids including morphine, heroin, DAMGO, fentanyl, etorphine, buprenorphin and methadone. Also activated by enkephalin peptides, such as Met-enkephalin or Met-enkephalin-Arg-Phe, with higher affinity for Met-enkephalin-Arg-Phe. Agonist binding to the receptor induces coupling to an inactive GDP-bound heterotrimeric G-protein complex and subsequent exchange of GDP for GTP in the G-protein alpha subunit leading to dissociation of the G-protein complex with the free GTP-bound G-protein alpha and the G-protein beta-gamma dimer activating downstream cellular effectors. The agonist- and cell type-specific activity is predominantly coupled to pertussis toxin-sensitive G(i) and G(o) G alpha proteins, GNAI1, GNAI2, GNAI3 and GNAO1, and to a lesser extent to pertussis toxin-insensitive G alpha proteins GNAZ and GNA15. They mediate an array of downstream cellular responses, including inhibition of adenylate cyclase activity and both N-type and L-type calcium channels, activation of inward rectifying potassium channels, mitogen-activated protein kinase (MAPK), phospholipase C (PLC), phosphoinositide/protein kinase (PKC), phosphoinositide 3-kinase (PI3K) and regulation of NF-kappa-B. Also couples to adenylate cyclase stimulatory G alpha proteins. The selective temporal coupling to G-proteins and subsequent signaling can be regulated by RGSZ proteins, such as RGS9, RGS17 and RGS4. Phosphorylation by members of the GPRK subfamily of Ser/Thr protein kinases and association with beta-arrestins is involved in short-term receptor desensitization. Beta-arrestins associate with the GPRK-phosphorylated receptor and uncouple it from the G-protein thus terminating signal transduction. The phosphorylated receptor is internalized through endocytosis via clathrin-coated pits which involves beta-arrestins. The activation of the ERK pathway occurs either in a G-protein-dependent or a beta-arrestin-dependent manner and is regulated by agonist-specific receptor phosphorylation. Acts as a class A G-protein coupled receptor (GPCR) which dissociates from beta-arrestin at or near the plasma membrane and undergoes rapid recycling. Receptor down-regulation pathways are varying with the agonist and occur dependent or independent of G-protein coupling. Endogenous ligands induce rapid desensitization, endocytosis and recycling. Heterooligomerization with other GPCRs can modulate agonist binding, signaling and trafficking properties. Involved in neurogenesis. This chain is Mu-type opioid receptor (OPRM1), found in Pan troglodytes (Chimpanzee).